We begin with the raw amino-acid sequence, 293 residues long: 16S rRNA (guanine(1405)-N(7))-methyltransferase (293 aa).

S-adenosyl-L-methionine is bound by residues F47, 80–82, R86, A111, D134, 160–161, L176, and Q185; these read HAS and DL. The span at 258–274 shows a compositional bias: low complexity; it reads GRPAPAEGAAEPGATRP. A disordered region spans residues 258-293; that stretch reads GRPAPAEGAAEPGATRPVVDVPATARPDADRVDPTG. The span at 284 to 293 shows a compositional bias: basic and acidic residues; that stretch reads PDADRVDPTG.

The protein belongs to the methyltransferase superfamily. Aminoglycoside resistance family.

The catalysed reaction is guanosine(1405) in 16S rRNA + S-adenosyl-L-methionine = N(7)-methylguanosine(1405) in 16S rRNA + S-adenosyl-L-homocysteine. Specifically methylates the N(7) position of guanine 1405 in 16S rRNA. Confers resistance to aminoglycosides. This Micromonospora olivasterospora protein is 16S rRNA (guanine(1405)-N(7))-methyltransferase (fmrO).